The following is a 595-amino-acid chain: Elongation factor 4 (595 aa).

Residues 2–183 (KNIRNFCIIA…AIIERISPPT (182 aa)) form the tr-type G domain. GTP-binding positions include 14-19 (DHGKST) and 130-133 (NKID).

It belongs to the TRAFAC class translation factor GTPase superfamily. Classic translation factor GTPase family. LepA subfamily.

It localises to the cell inner membrane. The enzyme catalyses GTP + H2O = GDP + phosphate + H(+). In terms of biological role, required for accurate and efficient protein synthesis under certain stress conditions. May act as a fidelity factor of the translation reaction, by catalyzing a one-codon backward translocation of tRNAs on improperly translocated ribosomes. Back-translocation proceeds from a post-translocation (POST) complex to a pre-translocation (PRE) complex, thus giving elongation factor G a second chance to translocate the tRNAs correctly. Binds to ribosomes in a GTP-dependent manner. The sequence is that of Elongation factor 4 from Amoebophilus asiaticus (strain 5a2).